A 190-amino-acid polypeptide reads, in one-letter code: Imidazoleglycerol-phosphate dehydratase (190 aa).

Belongs to the imidazoleglycerol-phosphate dehydratase family.

Its subcellular location is the cytoplasm. It carries out the reaction D-erythro-1-(imidazol-4-yl)glycerol 3-phosphate = 3-(imidazol-4-yl)-2-oxopropyl phosphate + H2O. Its pathway is amino-acid biosynthesis; L-histidine biosynthesis; L-histidine from 5-phospho-alpha-D-ribose 1-diphosphate: step 6/9. The polypeptide is Imidazoleglycerol-phosphate dehydratase (Nitratiruptor sp. (strain SB155-2)).